The sequence spans 192 residues: Hydrophobin-like protein rodD (192 aa).

3 cysteine pairs are disulfide-bonded: Cys-45/Cys-106, Cys-50/Cys-99, and Cys-107/Cys-112.

It belongs to the fungal hydrophobin family. In terms of assembly, self-assembles to form functional amyloid fibrils called rodlets. Self-assembly into fibrillar rodlets occurs spontaneously at hydrophobic:hydrophilic interfaces and the rodlets further associate laterally to form amphipathic monolayers.

Aerial growth, conidiation, and dispersal of filamentous fungi in the environment rely upon a capability of their secreting small amphipathic proteins called hydrophobins (HPBs) with low sequence identity. Class I can self-assemble into an outermost layer of rodlet bundles on aerial cell surfaces, conferring cellular hydrophobicity that supports fungal growth, development and dispersal; whereas Class II form highly ordered films at water-air interfaces through intermolecular interactions but contribute nothing to the rodlet structure. RodD is a an hydrophobin-like protein that, unlike rodA, is not required for rodlet formation. The sequence is that of Hydrophobin-like protein rodD from Aspergillus fumigatus (strain ATCC MYA-4609 / CBS 101355 / FGSC A1100 / Af293) (Neosartorya fumigata).